Consider the following 527-residue polypeptide: Type-2 serine--tRNA ligase (527 aa).

Residue alanine 317 coordinates L-serine. Residue cysteine 319 coordinates Zn(2+). Position 349 (arginine 349) interacts with L-serine. ATP is bound by residues 349–351 (RWE) and 360–361 (RV). 366-368 (RIE) serves as a coordination point for L-serine. Glutamate 368 and cysteine 478 together coordinate Zn(2+). Residue arginine 485 participates in ATP binding.

Belongs to the class-II aminoacyl-tRNA synthetase family. Type-2 seryl-tRNA synthetase subfamily. Homodimer. Zn(2+) serves as cofactor.

The protein localises to the cytoplasm. It carries out the reaction tRNA(Ser) + L-serine + ATP = L-seryl-tRNA(Ser) + AMP + diphosphate + H(+). The catalysed reaction is tRNA(Sec) + L-serine + ATP = L-seryl-tRNA(Sec) + AMP + diphosphate + H(+). Its pathway is aminoacyl-tRNA biosynthesis; selenocysteinyl-tRNA(Sec) biosynthesis; L-seryl-tRNA(Sec) from L-serine and tRNA(Sec): step 1/1. Functionally, catalyzes the attachment of serine to tRNA(Ser). Is also able to aminoacylate tRNA(Sec) with serine, to form the misacylated tRNA L-seryl-tRNA(Sec), which will be further converted into selenocysteinyl-tRNA(Sec). The protein is Type-2 serine--tRNA ligase of Methanopyrus kandleri (strain AV19 / DSM 6324 / JCM 9639 / NBRC 100938).